Consider the following 760-residue polypeptide: MAMEQFESVFTAKENAEIAKEFTRLKDTCYLDHAGTTLYADSQIRAVGDCLTGSLFCNPHTSRTTEDLLDQVRFRVLRHFGTHPSEYGLVFTSGTTGALKLVAECFDFGDEGAFVYTRDNHTSVLGMRAVVGTERIVPIGREDLRGGRSTGGGKSSLVVFPAQCNFNGFKYPLGLVEDIQRNGLVGFDGDRFHVCLDAASFVSTNALDLAKHQPSFVCLSFYKIFGFPTGLGALLVHRSAQNLLKKRYYGGGTVKIAMAGRNFHVKRDSLADQFEDGTVPFTSIISLLQGFETLERLVPASGELSSIDRVSRHTFALGRYCFQRLRGLRHANSNSVVKLYHDTEFEDRGSQGGIVNFNVLHEDGSFVGFAEVAYMASVHNVVLRTGCFCNPGACQRLLELTDEDVLKQFNAGHVCGDANDLIGGQPTGSVRVSFGYMSRREDVDRLVEMVEKCYVKKMTANGLTRKQIVSNYKNYDQPKLKMICLFPIKSCGAYKITTSWPLCHKGLKHDREFVIVDENGVAMTQKKLVEMCLIKPKIDIKTNTLILTHPAMENFTLSMEPLSNESQSIKLCQTKVCQDNVQAIDCGDAVANWISIALQTSGLRLLKQSDDEARTLRKSTTEIALSNQAQFLLINQASVRWLADLVPDWDDLSQEPTLESLVDRFRGNLIIDSVKPLEESSWTQLRIGPLEFSVDGPCSRCQMICIDQSSGTRTAEPLRTIAREFKGKMRFGIYLSHVKSLEGSDEKLLHCGSPLQVVAE.

Position 223 is an N6-(pyridoxal phosphate)lysine (lysine 223). The active site involves cysteine 389. The MOSC domain occupies 608–758 (QSDDEARTLR…LHCGSPLQVV (151 aa)).

Belongs to the class-V pyridoxal-phosphate-dependent aminotransferase family. MOCOS subfamily. Requires pyridoxal 5'-phosphate as cofactor.

The enzyme catalyses Mo-molybdopterin + L-cysteine + AH2 = thio-Mo-molybdopterin + L-alanine + A + H2O. Its function is as follows. Sulfurates the molybdenum cofactor. Sulfation of molybdenum is essential for xanthine dehydrogenase (XDH) and aldehyde oxidase (ADO) enzymes in which molybdenum cofactor is liganded by 1 oxygen and 1 sulfur atom in active form. The protein is Molybdenum cofactor sulfurase 2 of Culex quinquefasciatus (Southern house mosquito).